The primary structure comprises 285 residues: Release factor glutamine methyltransferase (285 aa).

S-adenosyl-L-methionine contacts are provided by D143 and N189. 189-192 (NPPY) lines the substrate pocket.

This sequence belongs to the protein N5-glutamine methyltransferase family. PrmC subfamily.

The catalysed reaction is L-glutaminyl-[peptide chain release factor] + S-adenosyl-L-methionine = N(5)-methyl-L-glutaminyl-[peptide chain release factor] + S-adenosyl-L-homocysteine + H(+). Functionally, methylates the class 1 translation termination release factors RF1/PrfA and RF2/PrfB on the glutamine residue of the universally conserved GGQ motif. The protein is Release factor glutamine methyltransferase of Clostridium acetobutylicum (strain ATCC 824 / DSM 792 / JCM 1419 / IAM 19013 / LMG 5710 / NBRC 13948 / NRRL B-527 / VKM B-1787 / 2291 / W).